We begin with the raw amino-acid sequence, 487 residues long: Zinc finger and BTB domain-containing protein 32 (487 aa).

One can recognise a BTB domain in the interval 29-87; sequence CDTLITVGGQEFPAHSLVLAGVSQQLGRRGQWALGEGISPSTFAQLLNFVYGESVELQP. A compositionally biased stretch (basic and acidic residues) spans 113 to 166; that stretch reads RGDRAKKPDPGLKKHQEEPEKPSRNAERELGDPGEKQKPEQVSRTGGREQEMLH. Disordered stretches follow at residues 113–208 and 308–371; these read RGDR…ADGK and QNQL…ARSR. Polar residues predominate over residues 308-320; sequence QNQLASSSPTPGS. Residues 357 to 369 are compositionally biased toward pro residues; that stretch reads PPRPHPPPAPPAR. C2H2-type zinc fingers lie at residues 373–395, 401–423, and 428–450; these read YACS…YRVH, FSCS…LRTH, and YRXX…MRGH. The disordered stretch occupies residues 468-487; the sequence is SSSRPSRPSTSPCCPSSSTT.

This sequence belongs to the krueppel C2H2-type zinc-finger protein family. As to quaternary structure, homodimer (via PTB domain). Interacts with the N-terminal of FANCC. Interacts with ZBTB16. Interacts with GATA3.

It localises to the nucleus. In terms of biological role, DNA-binding protein that binds to the to a 5'-TGTACAGTGT-3' core sequence. May function as a transcriptional transactivator and transcriptional repressor. Probably exerts its repressor effect by preventing GATA3 from binding to DNA. May play a role in regulating the differentiation and activation of helper T-cells. The protein is Zinc finger and BTB domain-containing protein 32 (ZBTB32) of Pan troglodytes (Chimpanzee).